The primary structure comprises 222 residues: N-(5'-phosphoribosyl)anthranilate isomerase (222 aa).

It belongs to the TrpF family.

It catalyses the reaction N-(5-phospho-beta-D-ribosyl)anthranilate = 1-(2-carboxyphenylamino)-1-deoxy-D-ribulose 5-phosphate. It functions in the pathway amino-acid biosynthesis; L-tryptophan biosynthesis; L-tryptophan from chorismate: step 3/5. This chain is N-(5'-phosphoribosyl)anthranilate isomerase, found in Xanthomonas oryzae pv. oryzae (strain PXO99A).